The chain runs to 234 residues: NAD-reducing hydrogenase HoxS subunit gamma (234 aa).

Positions 2-77 (SIQITIDGKT…GLNVEVNDPE (76 aa)) constitute a 2Fe-2S ferredoxin-type domain. 4 residues coordinate [2Fe-2S] cluster: C35, C46, C49, and C61. Positions 77–116 (ELVDMRKALVEFLFAEGNHNCPSCEKSGRCQLQAVGYEVD) constitute a 4Fe-4S His(Cys)3-ligated-type domain. [4Fe-4S] cluster is bound by residues H95, C97, C100, C106, C145, C148, C151, and C198.

The protein belongs to the complex I 75 kDa subunit family. Tetramer of an alpha and a gamma subunits (flavin-containing dimer), and a delta and a nickel-containing beta subunits (hydrogenase dimer). [2Fe-2S] cluster is required as a cofactor. Requires [4Fe-4S] cluster as cofactor.

Its subcellular location is the cytoplasm. The catalysed reaction is H2 + NAD(+) = NADH + H(+). Functionally, subunits alpha and gamma of HoxS constitute an NADH--oxidoreductase. In Cupriavidus necator (strain ATCC 17699 / DSM 428 / KCTC 22496 / NCIMB 10442 / H16 / Stanier 337) (Ralstonia eutropha), this protein is NAD-reducing hydrogenase HoxS subunit gamma (hoxU).